Here is a 305-residue protein sequence, read N- to C-terminus: Sulfate adenylyltransferase subunit 2 (305 aa).

Belongs to the PAPS reductase family. CysD subfamily. Heterodimer composed of CysD, the smaller subunit, and CysN.

The catalysed reaction is sulfate + ATP + H(+) = adenosine 5'-phosphosulfate + diphosphate. It participates in sulfur metabolism; hydrogen sulfide biosynthesis; sulfite from sulfate: step 1/3. Functionally, with CysN forms the ATP sulfurylase (ATPS) that catalyzes the adenylation of sulfate producing adenosine 5'-phosphosulfate (APS) and diphosphate, the first enzymatic step in sulfur assimilation pathway. APS synthesis involves the formation of a high-energy phosphoric-sulfuric acid anhydride bond driven by GTP hydrolysis by CysN coupled to ATP hydrolysis by CysD. The polypeptide is Sulfate adenylyltransferase subunit 2 (Pseudomonas syringae pv. tomato (strain ATCC BAA-871 / DC3000)).